A 346-amino-acid polypeptide reads, in one-letter code: UPF0283 membrane protein VIBHAR_01918 (346 aa).

The span at 1-17 (MSELKQKQVFKEKVMHS) shows a compositional bias: basic and acidic residues. Residues 1-28 (MSELKQKQVFKEKVMHSEEEDVSPELNT) are disordered. Transmembrane regions (helical) follow at residues 73–93 (LFAT…ITAI) and 98–118 (WLAL…LGAL).

It belongs to the UPF0283 family.

The protein localises to the cell inner membrane. The sequence is that of UPF0283 membrane protein VIBHAR_01918 from Vibrio campbellii (strain ATCC BAA-1116).